The primary structure comprises 170 residues: Crossover junction endodeoxyribonuclease RuvC (170 aa).

Active-site residues include Asp9, Glu70, and Asp145. Asp9, Glu70, and Asp145 together coordinate Mg(2+).

It belongs to the RuvC family. Homodimer which binds Holliday junction (HJ) DNA. The HJ becomes 2-fold symmetrical on binding to RuvC with unstacked arms; it has a different conformation from HJ DNA in complex with RuvA. In the full resolvosome a probable DNA-RuvA(4)-RuvB(12)-RuvC(2) complex forms which resolves the HJ. It depends on Mg(2+) as a cofactor.

It is found in the cytoplasm. The catalysed reaction is Endonucleolytic cleavage at a junction such as a reciprocal single-stranded crossover between two homologous DNA duplexes (Holliday junction).. Its function is as follows. The RuvA-RuvB-RuvC complex processes Holliday junction (HJ) DNA during genetic recombination and DNA repair. Endonuclease that resolves HJ intermediates. Cleaves cruciform DNA by making single-stranded nicks across the HJ at symmetrical positions within the homologous arms, yielding a 5'-phosphate and a 3'-hydroxyl group; requires a central core of homology in the junction. The consensus cleavage sequence is 5'-(A/T)TT(C/G)-3'. Cleavage occurs on the 3'-side of the TT dinucleotide at the point of strand exchange. HJ branch migration catalyzed by RuvA-RuvB allows RuvC to scan DNA until it finds its consensus sequence, where it cleaves and resolves the cruciform DNA. The polypeptide is Crossover junction endodeoxyribonuclease RuvC (Chlamydia muridarum (strain MoPn / Nigg)).